We begin with the raw amino-acid sequence, 1594 residues long: Calpain-D (1594 aa).

RanBP2-type zinc fingers lie at residues 1–35 (MGTI…VRKV) and 135–164 (LNRR…VSYL). 5 disordered regions span residues 210–256 (EEQH…TAID), 371–400 (EPQQ…NPTQ), 420–459 (ASSS…SSSG), 524–543 (KKKQ…GSGE), and 554–606 (AGLG…RLSG). Positions 215 to 229 (HQLHSQHLHKRHLKG) are enriched in basic residues. 2 stretches are compositionally biased toward polar residues: residues 246–255 (RRTQSLSTAI) and 371–385 (EPQQ…QLQR). Ser250 bears the Phosphoserine mark. Residues 438–459 (NSNSNSSGNSNIINNNSSSSSG) show a composition bias toward low complexity. Positions 528-541 (QIASESQTNNNTGS) are enriched in polar residues. The RanBP2-type 3 zinc finger occupies 643–673 (RSKMWICIKCSYAYNRLWLQTCEMCEAKAEQ). Positions 684-703 (QQQQQQHHHHHLQQQQAEAP) are disordered. 2 RanBP2-type zinc fingers span residues 704–733 (RDEP…SKLK) and 744–774 (RKGE…HRQP). Disordered stretches follow at residues 786–811 (RPDG…HQSG) and 860–884 (SLQQ…GSIV). The segment covering 860-871 (SLQQQRNSSSSG) has biased composition (polar residues). The RanBP2-type 6 zinc-finger motif lies at 927–956 (STKKWQCPACTYDNCAASVVCDICSSPRGL). Residues 1014 to 1321 (LFVDDSFPPA…FDCIDICKVR (308 aa)) form the Calpain catalytic domain. Residues Cys1079, His1245, and Asn1265 contribute to the active site.

This sequence belongs to the peptidase C2 family.

Its function is as follows. Has a role in eye development. Functionally, calcium-regulated non-lysosomal thiol-protease. This is Calpain-D (sol) from Drosophila melanogaster (Fruit fly).